The chain runs to 290 residues: Enoyl-CoA hydratase, mitochondrial (290 aa).

Residues 1–27 (MAALRALLPRACSSLLSSVRCPELRRF) constitute a mitochondrion transit peptide. Position 98–101 (98–101 (ADIK)) interacts with substrate. Position 101 is an N6-acetyllysine; alternate (K101). K101 carries the N6-succinyllysine; alternate modification. Phosphoserine is present on S114. The residue at position 115 (K115) is an N6-acetyllysine; alternate. N6-succinyllysine; alternate is present on K115. Substrate is bound at residue G141. Residue K204 is modified to N6-succinyllysine. K211 carries the N6-acetyllysine modification. Position 217 is an N6-acetyllysine; alternate (K217). At K217 the chain carries N6-succinyllysine; alternate.

It belongs to the enoyl-CoA hydratase/isomerase family. In terms of assembly, homohexamer; dimer of trimers. Post-translationally, acetylation of Lys-101 is observed in liver mitochondria from fasted mice but not from fed mice.

The protein resides in the mitochondrion matrix. It carries out the reaction a (3S)-3-hydroxyacyl-CoA = a (2E)-enoyl-CoA + H2O. The catalysed reaction is a (3E)-enoyl-CoA = a 4-saturated (2E)-enoyl-CoA. It catalyses the reaction (3E)-hexenoyl-CoA = (2E)-hexenoyl-CoA. The enzyme catalyses (3S)-3-hydroxybutanoyl-CoA = (2E)-butenoyl-CoA + H2O. It carries out the reaction 3-hydroxyisovaleryl-CoA = 3-methylbut-2-enoyl-CoA + H2O. The catalysed reaction is 3-hydroxypropanoyl-CoA = acryloyl-CoA + H2O. It catalyses the reaction 3-hydroxybutanoyl-CoA = (2E)-butenoyl-CoA + H2O. The enzyme catalyses 2-methylpropenoyl-CoA + H2O = (S)-3-hydroxyisobutanoyl-CoA. It carries out the reaction (3S)-hydroxyhexanoyl-CoA = (2E)-hexenoyl-CoA + H2O. The catalysed reaction is (3S)-hydroxydecanoyl-CoA = (2E)-decenoyl-CoA + H2O. It participates in lipid metabolism; fatty acid beta-oxidation. In terms of biological role, converts unsaturated trans-2-enoyl-CoA species ((2E)-enoyl-CoA) to the corresponding (3S)-3-hydroxyacyl-CoA species through addition of a water molecule to the double bond. Catalyzes the hydration of medium- and short-chained fatty enoyl-CoA thioesters from 4 carbons long (C4) up to C16. Has high substrate specificity for crotonyl-CoA ((2E)-butenoyl-CoA) and moderate specificity for acryloyl-CoA, 3-methylcrotonyl-CoA (3-methyl-(2E)-butenoyl-CoA) and methacrylyl-CoA ((2E)-2-methylpropenoyl-CoA). Can bind tiglyl-CoA (2-methylcrotonoyl-CoA), but hydrates only a small amount of this substrate. Plays a key role in the beta-oxidation spiral of short- and medium-chain fatty acid oxidation. At a lower rate than the hydratase reaction, catalyzes the isomerase reaction of trans-3-enoyl-CoA species (such as (3E)-hexenoyl-CoA) to trans-2-enoyl-CoA species (such as (2E)-hexenoyl-CoA), which are subsequently hydrated to 3(S)-3-hydroxyacyl-CoA species (such as (3S)-hydroxyhexanoyl-CoA). The chain is Enoyl-CoA hydratase, mitochondrial from Mus musculus (Mouse).